A 210-amino-acid polypeptide reads, in one-letter code: Two-component response regulator ORR7 (210 aa).

A disordered region spans residues 53 to 92; sequence VVPLHDNASAEDDDDDEEDDDEDDDDDDDEDDEEEAAPPY. Acidic residues predominate over residues 61-88; the sequence is SAEDDDDDEEDDDEDDDDDDDEDDEEEA. Residues 92 to 205 enclose the Response regulatory domain; sequence YVMAVDDSSV…VRPADISRIT (114 aa). Aspartate 142 is modified (4-aspartylphosphate).

The protein belongs to the ARR family. Type-A subfamily. Two-component system major event consists of a His-to-Asp phosphorelay between a sensor histidine kinase (HK) and a response regulator (RR). In plants, the His-to-Asp phosphorelay involves an additional intermediate named Histidine-containing phosphotransfer protein (HPt). This multistep phosphorelay consists of a His-Asp-His-Asp sequential transfer of a phosphate group between first a His and an Asp of the HK protein, followed by the transfer to a conserved His of the HPt protein and finally the transfer to an Asp in the receiver domain of the RR protein.

Its function is as follows. Functions as a response regulator involved in His-to-Asp phosphorelay signal transduction system. Phosphorylation of the Asp residue in the receiver domain activates the ability of the protein to promote the transcription of target genes. Type-A response regulators seem to act as negative regulators of the cytokinin signaling. This chain is Two-component response regulator ORR7, found in Oryza sativa subsp. japonica (Rice).